The chain runs to 522 residues: MSGFNFGGTGAPTGGFTFGTAKTATTTPATGFSFSTSGTGGFNFGAPFQPATSTPSTGLFSLATQTPATQTTGFTFGTATLASGGTGFSLGIGASKLNLSNTAATPAMANPSGFGLGSSNLTNAISSTVTSSQGTAPTGFVFGPSTTSVAPATTSGGFSFTGGSTAQPSGFNIGSAGNSAQPTAPATLPFTPATPAATTAGATQPAAPTPTATITSTGPSLFASIATAPTSSATTGLSLCTPVTTAGAPTAGTQGFSLKAPGAASGTSTTTSTAATATATTTSSSSTTGFALNLKPLAPAGIPSNTAAAVTAPPGPGAAAGAAASSAMTYAQLESLINKWSLELEDQERHFLQQATQVNAWDRTLIENGEKITSLHREVEKVKLDQKRLDQELDFILSQQKELEDLLSPLEELVKEQSGTIYLQHADEEREKTYKLAENIDAQLKRMAQDLKDIIEHLNTSGAPADTSDPLQQICKILNAHMDSLQWIDQNSALLQRKVEEVTKVCEGRRKEQERSFRITFD.

The residue at position 2 (serine 2) is an N-acetylserine. 5 tandem repeats follow at residues 6 to 7 (FG), 44 to 45 (FG), 76 to 77 (FG), 114 to 115 (FG), and 142 to 143 (FG). The interval 6 to 143 (FGGTGAPTGG…GTAPTGFVFG (138 aa)) is 5 X 2 AA repeats of F-G. A compositionally biased stretch (polar residues) spans 169–179 (SGFNIGSAGNS). 2 disordered regions span residues 169–215 (SGFN…ATIT) and 260–288 (APGA…SSTT). 2 stretches are compositionally biased toward low complexity: residues 180–215 (AQPT…ATIT) and 262–288 (GAAS…SSTT). The interval 328–458 (MTYAQLESLI…QDLKDIIEHL (131 aa)) is required for centrosome localization. Residues 328–458 (MTYAQLESLI…QDLKDIIEHL (131 aa)) adopt a coiled-coil conformation. O-linked (GlcNAc) threonine glycosylation is present at threonine 373. Serine 408 and serine 418 each carry phosphoserine. An O-linked (GlcNAc) serine glycan is attached at serine 468.

It belongs to the nucleoporin NSP1/NUP62 family. In terms of assembly, component of the p62 complex, a complex at least composed of NUP62, NUP54, and NUP58. Interacts with NUP88. Interacts with NUTF2. Interacts with HIKESHI. Interacts with OSBPL8. Interacts with CAPG. Interacts with SAS6 and TUBG1 at the centrosome. Interacts with MCM3AP isoform GANP. As to quaternary structure, (Microbial infection) Interacts with Epstein-barr virus BGLF4; this interaction allows BGLF4 nuclear entry. Post-translationally, O-glycosylated. Contains about 10 N-acetylglucosamine side chain sites predicted for the entire protein, among which only one in the C-terminal. The inner channel of the NPC has a different redox environment from the cytoplasm and allows the formation of interchain disulfide bonds between some nucleoporins, the significant increase of these linkages upon oxidative stress reduces the permeability of the NPC.

The protein resides in the nucleus. It is found in the nuclear pore complex. Its subcellular location is the cytoplasm. The protein localises to the cytoskeleton. It localises to the spindle pole. The protein resides in the nucleus envelope. It is found in the microtubule organizing center. Its subcellular location is the centrosome. In terms of biological role, essential component of the nuclear pore complex. The N-terminal is probably involved in nucleocytoplasmic transport. The C-terminal is involved in protein-protein interaction probably via coiled-coil formation, promotes its association with centrosomes and may function in anchorage of p62 to the pore complex. Plays a role in mitotic cell cycle progression by regulating centrosome segregation, centriole maturation and spindle orientation. It might be involved in protein recruitment to the centrosome after nuclear breakdown. This is Nuclear pore glycoprotein p62 (NUP62) from Homo sapiens (Human).